Reading from the N-terminus, the 171-residue chain is Secreted protein CSS3 (171 aa).

The N-terminal stretch at methionine 1 to alanine 20 is a signal peptide. 3 N-linked (GlcNAc...) asparagine glycosylation sites follow: asparagine 37, asparagine 139, and asparagine 159.

Its subcellular location is the cytoplasm. It is found in the secreted. In Saccharomyces cerevisiae (strain ATCC 204508 / S288c) (Baker's yeast), this protein is Secreted protein CSS3.